Consider the following 412-residue polypeptide: [Pyruvate dehydrogenase (acetyl-transferring)] kinase isozyme 4, mitochondrial (412 aa).

The region spanning 138 to 368 (ILEYKDTCTV…DAIIYLKALS (231 aa)) is the Histidine kinase domain. Residues 254 to 261 (ELFKNAMR), aspartate 293, 312 to 313 (ST), and 329 to 334 (GFGYGL) each bind ATP.

The protein belongs to the PDK/BCKDK protein kinase family. In terms of assembly, homodimer. Interacts with the pyruvate dehydrogenase complex subunit DLAT, and is part of the multimeric pyruvate dehydrogenase complex that contains multiple copies of pyruvate dehydrogenase (E1), dihydrolipoamide acetyltransferase (DLAT, E2) and lipoamide dehydrogenase (DLD, E3). As to expression, detected in skeletal muscle and heart.

The protein localises to the mitochondrion matrix. The enzyme catalyses L-seryl-[pyruvate dehydrogenase E1 alpha subunit] + ATP = O-phospho-L-seryl-[pyruvate dehydrogenase E1 alpha subunit] + ADP + H(+). Its function is as follows. Kinase that plays a key role in regulation of glucose and fatty acid metabolism and homeostasis via phosphorylation of the pyruvate dehydrogenase subunits PDHA1 and PDHA2. This inhibits pyruvate dehydrogenase activity, and thereby regulates metabolite flux through the tricarboxylic acid cycle, down-regulates aerobic respiration and inhibits the formation of acetyl-coenzyme A from pyruvate. Inhibition of pyruvate dehydrogenase decreases glucose utilization and increases fat metabolism in response to prolonged fasting and starvation. Plays an important role in maintaining normal blood glucose levels under starvation, and is involved in the insulin signaling cascade. Via its regulation of pyruvate dehydrogenase activity, plays an important role in maintaining normal blood pH and in preventing the accumulation of ketone bodies under starvation. In the fed state, mediates cellular responses to glucose levels and to a high-fat diet. Regulates both fatty acid oxidation and de novo fatty acid biosynthesis. Plays a role in the generation of reactive oxygen species. Protects detached epithelial cells against anoikis. Plays a role in cell proliferation via its role in regulating carbohydrate and fatty acid metabolism. The protein is [Pyruvate dehydrogenase (acetyl-transferring)] kinase isozyme 4, mitochondrial (PDK4) of Ictidomys tridecemlineatus (Thirteen-lined ground squirrel).